The primary structure comprises 554 residues: Methyl-coenzyme M reductase II subunit alpha (554 aa).

Residue Gln151 participates in coenzyme F430 binding. Coenzyme B contacts are provided by residues Arg229, 260 to 261, and Arg274; that span reads KH. 2 residues coordinate coenzyme M: Tyr336 and Tyr447.

It belongs to the methyl-coenzyme M reductase alpha subunit family. MCR is a hexamer of two alpha, two beta, and two gamma chains, forming a dimer of heterotrimers. Requires coenzyme F430 as cofactor.

It catalyses the reaction coenzyme B + methyl-coenzyme M = methane + coenzyme M-coenzyme B heterodisulfide. Its pathway is one-carbon metabolism; methyl-coenzyme M reduction; methane from methyl-coenzyme M: step 1/1. Component of the methyl-coenzyme M reductase (MCR) I that catalyzes the reductive cleavage of methyl-coenzyme M (CoM-S-CH3 or 2-(methylthio)ethanesulfonate) using coenzyme B (CoB or 7-mercaptoheptanoylthreonine phosphate) as reductant which results in the production of methane and the mixed heterodisulfide of CoB and CoM (CoM-S-S-CoB). This is the final step in methanogenesis. The protein is Methyl-coenzyme M reductase II subunit alpha (mrtA) of Methanothermus fervidus (strain ATCC 43054 / DSM 2088 / JCM 10308 / V24 S).